Here is a 209-residue protein sequence, read N- to C-terminus: Protease (209 aa).

Active-site residues include H60, D77, and C127.

Belongs to the peptidase C5 family. In terms of assembly, interacts with protease cofactor pVI-C; this interaction is necessary for protease activation.

The protein localises to the virion. It is found in the host nucleus. The enzyme catalyses Cleaves proteins of the adenovirus and its host cell at two consensus sites: -Yaa-Xaa-Gly-Gly-|-Xaa- and -Yaa-Xaa-Gly-Xaa-|-Gly- (in which Yaa is Met, Ile or Leu, and Xaa is any amino acid).. Requires DNA and protease cofactor for maximal activation. Inside nascent virions, becomes partially activated by binding to the viral DNA, allowing it to cleave the cofactor that binds to the protease and fully activates it. Actin, like the viral protease cofactor, seems to act as a cofactor in the cleavage of cytokeratin 18 and of actin itself. In terms of biological role, cleaves viral precursor proteins (pTP, pIIIa, pVI, pVII, pVIII, and pX) inside newly assembled particles giving rise to mature virions. Protease complexed to its cofactor slides along the viral DNA to specifically locate and cleave the viral precursors. Mature virions have a weakened organization compared to the unmature virions, thereby facilitating subsequent uncoating. Without maturation, the particle lacks infectivity and is unable to uncoat. Late in adenovirus infection, in the cytoplasm, may participate in the cytoskeleton destruction. Cleaves host cell cytoskeletal keratins K7 and K18. The chain is Protease from Homo sapiens (Human).